Here is a 480-residue protein sequence, read N- to C-terminus: MDEFEEYRNPLTKRYASREMVCNFGEKRKVILWRQLWIWLAETQKELGFDITDEQINEMKSQRDSVDFGTAAAEEKARRHDVMAHVYTFALACPKAAPIIHLGATSCFVGDNADLIMLKDGLNILLPKVARCIDRLAKKAMLHKSLICLARTHLQPAQPTTMGRRICMWIQDLLLDLENLERLKNHTIRFRGAKGAVGTQASFMDLFQGDHQKVIKLDEILTKKSGFQRSWCVTGQTYPRKVDIEITNALSNIGATVHKICTDIRLLSSFHEVEEPFETKQIGSSAMPYKRNPIRSERACSLARYLMHISTSMVSTVSVQWLERSLDDSAIRRIVLPEAFLAADACLTLLQNIAEGLIVYPMVMEANLNSELPFLVVERILVKMVSEGAANRQECHERLRKHSHEAAAEIKLKGLKNSLMDKLLNDYYFAPIHSLLPTVLDPSYMIGRAVEQVEVFLNTEVDPAIHSYKDCLALNSNITI.

AMP-binding residues include R14, Y15, R79, H80, and D81. Position 80 (H80) interacts with fumarate. H153 serves as the catalytic Proton donor/acceptor. Q236 contributes to the AMP binding site. Position 236 (Q236) interacts with fumarate. Q236 lines the N(6)-(1,2-dicarboxyethyl)-AMP pocket. S284 serves as the catalytic Proton donor/acceptor. Residues S285, K290, and N292 each coordinate fumarate. Residues S285, K290, and N292 each contribute to the N(6)-(1,2-dicarboxyethyl)-AMP site. Position 298 (R298) interacts with AMP. The N(6)-(1,2-dicarboxyethyl)-AMP site is built by R324, S329, and R333. The AMP site is built by S329 and R333.

Belongs to the lyase 1 family. Adenylosuccinate lyase subfamily. In terms of assembly, homotetramer.

The catalysed reaction is N(6)-(1,2-dicarboxyethyl)-AMP = fumarate + AMP. Its pathway is purine metabolism; AMP biosynthesis via salvage pathway. Its function is as follows. Catalyzes conversion of succinyladenosine monophosphate (SAMP) to AMP and fumarate on the purine salvage pathway. This chain is Adenylosuccinate lyase, found in Schistosoma mansoni (Blood fluke).